The sequence spans 177 residues: Bifunctional protein PyrR (177 aa).

Residues serine 42–arginine 43, aspartate 104–threonine 112, and arginine 137 contribute to the substrate site. Residues valine 100–threonine 112 carry the PRPP-binding motif.

Belongs to the purine/pyrimidine phosphoribosyltransferase family. PyrR subfamily.

It catalyses the reaction UMP + diphosphate = 5-phospho-alpha-D-ribose 1-diphosphate + uracil. Regulates the transcription of the pyrimidine nucleotide (pyr) operon in response to exogenous pyrimidines. Functionally, also displays a weak uracil phosphoribosyltransferase activity which is not physiologically significant. The sequence is that of Bifunctional protein PyrR from Fusobacterium nucleatum subsp. nucleatum (strain ATCC 25586 / DSM 15643 / BCRC 10681 / CIP 101130 / JCM 8532 / KCTC 2640 / LMG 13131 / VPI 4355).